The sequence spans 451 residues: Deoxyguanosinetriphosphate triphosphohydrolase-like protein (451 aa).

Residues 61–274 (RLTHSLEVAQ…MELADDIAYG (214 aa)) enclose the HD domain.

It belongs to the dGTPase family. Type 2 subfamily.

In Actinobacillus succinogenes (strain ATCC 55618 / DSM 22257 / CCUG 43843 / 130Z), this protein is Deoxyguanosinetriphosphate triphosphohydrolase-like protein.